Reading from the N-terminus, the 427-residue chain is Mitochondrial distribution and morphology protein 12 (427 aa).

Positions 1–387 (MSFDINWNQL…WPSWICIDMN (387 aa)) constitute an SMP-LTD domain. Residues 81 to 96 (NDSKDEHLKNHGDGIN) are compositionally biased toward basic and acidic residues. Disordered stretches follow at residues 81 to 168 (NDSK…APPL) and 387 to 427 (NDDD…EAGE). Residues 106-133 (LDDEDEDDEDDDEDDEDEEEEDEDDYDD) are compositionally biased toward acidic residues. A compositionally biased stretch (polar residues) spans 146–161 (LNFNENSTTPSANSFA). Residues 387 to 402 (NDDDDEEEEEESEDND) show a composition bias toward acidic residues. Basic and acidic residues predominate over residues 411-427 (NDGKHGDGRTDETEAGE).

The protein belongs to the MDM12 family. Component of the ER-mitochondria encounter structure (ERMES) or MDM complex, composed of MMM1, MDM10, MDM12 and MDM34. An MMM1 homodimer associates with one molecule of MDM12 on each side in a pairwise head-to-tail manner, and the SMP-LTD domains of MMM1 and MDM12 generate a continuous hydrophobic tunnel for phospholipid trafficking.

The protein localises to the mitochondrion outer membrane. The protein resides in the endoplasmic reticulum membrane. In terms of biological role, component of the ERMES/MDM complex, which serves as a molecular tether to connect the endoplasmic reticulum (ER) and mitochondria. Components of this complex are involved in the control of mitochondrial shape and protein biogenesis, and function in nonvesicular lipid trafficking between the ER and mitochondria. MDM12 is required for the interaction of the ER-resident membrane protein MMM1 and the outer mitochondrial membrane-resident beta-barrel protein MDM10. The MDM12-MMM1 subcomplex functions in the major beta-barrel assembly pathway that is responsible for biogenesis of all mitochondrial outer membrane beta-barrel proteins, and acts in a late step after the SAM complex. The MDM10-MDM12-MMM1 subcomplex further acts in the TOM40-specific pathway after the action of the MDM12-MMM1 complex. Essential for establishing and maintaining the structure of mitochondria and maintenance of mtDNA nucleoids. This chain is Mitochondrial distribution and morphology protein 12, found in Candida albicans (strain WO-1) (Yeast).